A 155-amino-acid chain; its full sequence is Trypsin/factor XIIA inhibitor (155 aa).

The first 28 residues, 1–28, serve as a signal peptide directing secretion; sequence MASSSSSSHRRLILAAAVLLSVLAAASA. Intrachain disulfides connect Cys-34–Cys-83, Cys-48–Cys-72, Cys-57–Cys-114, Cys-73–Cys-132, and Cys-85–Cys-143. Arg-62 is a catalytic residue. The propeptide at 139-155 is C-terminal peptide; that stretch reads GVAECPWILGGGTMPSK.

It belongs to the protease inhibitor I6 (cereal trypsin/alpha-amylase inhibitor) family. In terms of assembly, monomer.

The protein localises to the secreted. Potent inhibitor of mammalian trypsin and a specific inhibitor of factor XIIa (activated hageman factor). The sequence is that of Trypsin/factor XIIA inhibitor from Zea mays (Maize).